A 3902-amino-acid chain; its full sequence is Hybrid PKS-NRPS synthetase pynA (3902 aa).

Residues 1–25 are disordered; that stretch reads MDTPLSSSEISPRFSNTVPSSVSSM. The Ketosynthase family 3 (KS3) domain maps to 29–441; that stretch reads ADPSVIVGLA…GTNAHVILDA (413 aa). Active-site for beta-ketoacyl synthase activity residues include C201, H324, and H362. Residues 555-868 form a malonyl-CoA:ACP transacylase (MAT) domain region; that stretch reads VFTGQGAQWF…PYLASLTRGV (314 aa). The active-site For malonyltransferase activity is S647. Residues 945-1080 form an N-terminal hotdog fold region; that stretch reads HSILGARMPG…GLVSVETNAL (136 aa). The dehydratase (DH) domain stretch occupies residues 945–1256; that stretch reads HSILGARMPG…LEVTALGSDK (312 aa). The 314-residue stretch at 945–1258 folds into the PKS/mFAS DH domain; sequence HSILGARMPG…VTALGSDKTD (314 aa). H977 functions as the Proton acceptor; for dehydratase activity in the catalytic mechanism. The C-terminal hotdog fold stretch occupies residues 1100 to 1258; it reads QESIPAETLY…VTALGSDKTD (159 aa). D1164 serves as the catalytic Proton donor; for dehydratase activity. Positions 1629-1945 are enoyl reductase (ER) domain; it reads GLLETLVFED…MGKHTGKVVL (317 aa). Residues 1971–2143 form a ketoreductase (KR) domain region; sequence TYLLVGGLGG…AGTTMNCGMI (173 aa). The Carrier 1 domain maps to 2251–2328; sequence ERTTLVLSAF…ALVTKASGLI (78 aa). The residue at position 2288 (S2288) is an O-(pantetheine 4'-phosphoryl)serine. The segment covering 2337 to 2350 has biased composition (basic and acidic residues); the sequence is KAENVDNEGAKGNE. Residues 2337–2364 are disordered; sequence KAENVDNEGAKGNEDQEVETQQGQLNQP. Positions 2374–2816 are condensation (C) domain 7; it reads VPMSSFQQRL…AEVNLCGALE (443 aa). The tract at residues 2836-3248 is adenylation (A) domain 8; the sequence is SVGVCQRIME…NGLLTFKGRI (413 aa). Residues 3391 to 3467 enclose the Carrier 2 domain; sequence GDDAEILQGV…AIAGMIQKQL (77 aa). An O-(pantetheine 4'-phosphoryl)serine modification is found at S3427. The thioesterase (TE) domain stretch occupies residues 3515-3774; sequence LTGIDTFIGL…VDFLPVDALT (260 aa).

This sequence in the C-terminal section; belongs to the NRP synthetase family.

It participates in secondary metabolite biosynthesis. In terms of biological role, hybrid PKS-NRPS synthetase; part of the gene cluster that mediates the biosynthesis of pyranonigrins, a family of antioxidative compounds. The first step of pyranonigrins biosynthesis is performed by the hybrid PKS-NRPS synthetase that condenses 6 malonyl-CoA units to an acetyl starter unit, to form a 1,3,5-trioxotetradecane-6,8-dienyl-ACP. The enoyl reductase (ER) domain of pynA is likely to be functional during the first two rounds of polyketide chain extension, to generate the saturated C-C bonds of the alkyl side chain. PynA subsequently forms the amide bond between the acyl chain and L-serine. Although pynA has a terminal reductase domain, it appears to require the thioesterase pynI for the release of the straight-chain intermediate from pynA via the formation of a tetramic acid pyranonigrin J. The methyltransferase pynC then coverts pyranonigrin J to pyranonigrin I via N-methylation. The FAD-dependent monooxygenase pynG catalyzes an epoxidation-mediated cyclization to form the dihydro-gamma-pyrone moiety, followed by pynD-catalyzed oxidation of the alcohol to the ketone and enolization to yield the characteristic tetramic acid-fused gamma-pyrone core of pyranonigrin H. Pyranonigrin H is substrate of pynH for dehydration-mediated exo-methylene formation from the serine side chain to produce pyranonigrin E, before the oxidase pynE reduces the exo-methylene of pyranonigrin E into a pendant methyl to form pyranonigrin G. The FAD-linked oxidoreductase pynB performs the reverse reaction and converts pyranonigrin G back to pyranonigrin E. The sequence is that of Hybrid PKS-NRPS synthetase pynA from Aspergillus niger (strain ATCC MYA-4892 / CBS 513.88 / FGSC A1513).